The sequence spans 85 residues: F(1)-ATPase inhibitor IF(1), mitochondrial (85 aa).

Residues 1–22 (MLPRSALARSLQLQRGVAARFY) constitute a mitochondrion transit peptide. Positions 41–84 (KRERATEDFFVRQREKEQLRHLKEQLEKQRKKIDSLENKIDSMT) form a coiled coil.

It belongs to the ATPase inhibitor family. As to quaternary structure, monomer and homodimer. The protein aggregates less strongly with increasing pH.

The protein localises to the mitochondrion. In terms of biological role, endogenous ATPase inhibitor, which inhibits specifically the reverse ATPase reaction of mitochondrial F(1)F(0)-type ATP synthase. It limits ATP depletion when the mitochondrial membrane potential falls below a threshold and the F(1)F(0)-ATP synthase starts hydrolyzing ATP to pump protons out of the mitochondrial matrix. Required to avoid the consumption of cellular ATP when the F(1)F(0)-ATP synthase enzyme acts as an ATP hydrolase. Functions through inserting its N-terminal part into the catalytically active F1-ATPase, thereby blocking its rotational movement and subsequently the ATP hydrolase activity. The chain is F(1)-ATPase inhibitor IF(1), mitochondrial (INH1) from Saccharomyces cerevisiae (strain ATCC 204508 / S288c) (Baker's yeast).